Consider the following 249-residue polypeptide: uncharacterized protein (249 aa).

Belongs to the HAD-like hydrolase superfamily. CbbY/CbbZ/Gph/YieH family.

This is an uncharacterized protein from Schizosaccharomyces pombe (strain 972 / ATCC 24843) (Fission yeast).